Consider the following 138-residue polypeptide: MARLTVEECMGRTNNKFKLVILASQRAHDLNSGACPVIKYKNGKNTVIALKEIAAKQLDVSSLFNLSVQRCRKYMEKFINSDEPYIAHKPKNNVDIFQASAVAGNSDGLENSSNSRDDNPLGRDNFFSTPENRNNTNS.

A disordered region spans residues 104–138 (GNSDGLENSSNSRDDNPLGRDNFFSTPENRNNTNS). A compositionally biased stretch (polar residues) spans 126-138 (FFSTPENRNNTNS).

The protein belongs to the RNA polymerase subunit omega family. The RNAP catalytic core consists of 2 alpha, 1 beta, 1 beta' and 1 omega subunit. When a sigma factor is associated with the core the holoenzyme is formed, which can initiate transcription.

The enzyme catalyses RNA(n) + a ribonucleoside 5'-triphosphate = RNA(n+1) + diphosphate. Functionally, promotes RNA polymerase assembly. Latches the N- and C-terminal regions of the beta' subunit thereby facilitating its interaction with the beta and alpha subunits. In Ehrlichia chaffeensis (strain ATCC CRL-10679 / Arkansas), this protein is DNA-directed RNA polymerase subunit omega.